The primary structure comprises 636 residues: Putative lipase ATG15 (636 aa).

The Cytoplasmic portion of the chain corresponds to 1 to 19; that stretch reads MYKYGTVVDPAMTTNRRSR. The helical; Signal-anchor for type II membrane protein transmembrane segment at 20-42 threads the bilayer; the sequence is LSGFRCASTARVTATLLLSFLAF. The Lumenal portion of the chain corresponds to 43–636; the sequence is SPSSASSDFG…DDLEFATDEM (594 aa). Residues asparagine 211, asparagine 233, asparagine 291, asparagine 315, and asparagine 477 are each glycosylated (N-linked (GlcNAc...) asparagine). The disordered stretch occupies residues 478–500; that stretch reads GTETTTTSSPSTTSTTRTRTRTS. The segment covering 479-500 has biased composition (low complexity); that stretch reads TETTTTSSPSTTSTTRTRTRTS.

It belongs to the AB hydrolase superfamily. Lipase family. As to quaternary structure, binds to both phosphatidylinositol (PI) and phosphatidylinositol 3,5-bisphosphate (PIP2).

The protein localises to the endosome. Its subcellular location is the multivesicular body membrane. The protein resides in the prevacuolar compartment membrane. It catalyses the reaction a triacylglycerol + H2O = a diacylglycerol + a fatty acid + H(+). In terms of biological role, lipase which is essential for lysis of subvacuolar cytoplasm to vacuole targeted bodies and intravacuolar autophagic bodies. Involved in the lysis of intravacuolar multivesicular body (MVB) vesicles. The intravacuolar membrane disintegration by ATG15 is critical to life span extension. Autophagy is required for proper vegetative growth, asexual/sexual reproduction, and full virulence. Autophagy is particularly involved in the biosynthesis of deoxynivalenol (DON), an important virulence determinant. In Gibberella zeae (strain ATCC MYA-4620 / CBS 123657 / FGSC 9075 / NRRL 31084 / PH-1) (Wheat head blight fungus), this protein is Putative lipase ATG15.